Reading from the N-terminus, the 314-residue chain is Porphobilinogen deaminase (314 aa).

C249 is subject to S-(dipyrrolylmethanemethyl)cysteine.

This sequence belongs to the HMBS family. In terms of assembly, monomer. The cofactor is dipyrromethane.

It catalyses the reaction 4 porphobilinogen + H2O = hydroxymethylbilane + 4 NH4(+). Its pathway is porphyrin-containing compound metabolism; protoporphyrin-IX biosynthesis; coproporphyrinogen-III from 5-aminolevulinate: step 2/4. Tetrapolymerization of the monopyrrole PBG into the hydroxymethylbilane pre-uroporphyrinogen in several discrete steps. This Brucella suis biovar 1 (strain 1330) protein is Porphobilinogen deaminase.